The sequence spans 246 residues: Probable transcriptional regulatory protein WD_0484 (246 aa).

The tract at residues Met1–Ser22 is disordered.

The protein belongs to the TACO1 family.

Its subcellular location is the cytoplasm. The protein is Probable transcriptional regulatory protein WD_0484 of Wolbachia pipientis wMel.